Reading from the N-terminus, the 467-residue chain is Ribulose bisphosphate carboxylase large chain (467 aa).

Residues Xaa106 and Thr156 each contribute to the substrate site. The active-site Proton acceptor is Lys158. Residue Lys160 participates in substrate binding. Mg(2+) contacts are provided by Lys184, Asp186, and Glu187. Lys184 is modified (N6-carboxylysine). The active-site Proton acceptor is His276. Positions 277, 309, and 361 each coordinate substrate.

This sequence belongs to the RuBisCO large chain family. Type I subfamily. Heterohexadecamer of 8 large chains and 8 small chains. Requires Mg(2+) as cofactor.

The protein localises to the plastid. The protein resides in the chloroplast. It carries out the reaction 2 (2R)-3-phosphoglycerate + 2 H(+) = D-ribulose 1,5-bisphosphate + CO2 + H2O. The enzyme catalyses D-ribulose 1,5-bisphosphate + O2 = 2-phosphoglycolate + (2R)-3-phosphoglycerate + 2 H(+). RuBisCO catalyzes two reactions: the carboxylation of D-ribulose 1,5-bisphosphate, the primary event in carbon dioxide fixation, as well as the oxidative fragmentation of the pentose substrate in the photorespiration process. Both reactions occur simultaneously and in competition at the same active site. The chain is Ribulose bisphosphate carboxylase large chain (rbcL) from Chondrus crispus (Carrageen Irish moss).